Reading from the N-terminus, the 124-residue chain is MIALIAAVSAGGIAGTLLRFATTNWVAAHWPRHFYAGTLAVNLVGCLLIGLLYGLFLHKPLAPVELRAGLIVGFLGGLTTFSSFSLDTVRLMESGQVPLALGYTSISVVGGLLATWAGLSLTRF.

4 helical membrane passes run 1–21 (MIAL…LRFA), 37–57 (GTLA…GLFL), 69–89 (GLIV…LDTV), and 99–119 (LALG…WAGL). The Na(+) site is built by G76 and T79.

The protein belongs to the fluoride channel Fluc/FEX (TC 1.A.43) family.

Its subcellular location is the cell inner membrane. It catalyses the reaction fluoride(in) = fluoride(out). Na(+) is not transported, but it plays an essential structural role and its presence is essential for fluoride channel function. Its function is as follows. Fluoride-specific ion channel. Important for reducing fluoride concentration in the cell, thus reducing its toxicity. This chain is Fluoride-specific ion channel FluC, found in Pseudomonas putida (strain ATCC 700007 / DSM 6899 / JCM 31910 / BCRC 17059 / LMG 24140 / F1).